The primary structure comprises 445 residues: Nuclear hormone receptor family member nhr-1 (445 aa).

A disordered region spans residues 19–55 (PMVNSQRNEDPSMYMNGSAASVSHTNGSSSMGNDQKF). The segment covering 36 to 51 (SAASVSHTNGSSSMGN) has biased composition (polar residues). The nuclear receptor DNA-binding region spans 70-145 (GELCAVCSDL…VGMDAKALQI (76 aa)). 2 consecutive NR C4-type zinc fingers follow at residues 73 to 93 (CAVC…CNGC) and 109 to 133 (CQYN…FNKC). One can recognise an NR LBD domain in the interval 179–444 (QDQEIIDQLT…PFVKELCMKR (266 aa)).

Belongs to the nuclear hormone receptor family.

It localises to the nucleus. In terms of biological role, orphan nuclear receptor which acts in concert with the insulin/IGF-1-like signaling (IIS) pathway during osmotic stress, perhaps in response to a ligand modified by the sulfotransferase ssu-1. The chain is Nuclear hormone receptor family member nhr-1 (nhr-1) from Caenorhabditis elegans.